Here is a 681-residue protein sequence, read N- to C-terminus: Type VI secretion system spike protein VgrG2 (681 aa).

The interval Ala284–Asn309 is disordered. A compositionally biased stretch (polar residues) spans Gly289–Asn309.

The protein belongs to the VgrG protein family.

Part of the type VI secretion system specialized secretion system, which delivers several virulence factors in both prokaryotic and eukaryotic cells during infection. Plays an essential role in bacterial mobility and biofilm formation. The chain is Type VI secretion system spike protein VgrG2 from Aeromonas hydrophila.